A 556-amino-acid polypeptide reads, in one-letter code: Urocanate hydratase (556 aa).

NAD(+)-binding positions include 52 to 53, Gln130, 176 to 178, Glu196, Arg201, 242 to 243, 263 to 267, 273 to 274, and Tyr322; these read GG, GMG, NA, QTSAH, and YL. The active site involves Cys410. Gly492 contributes to the NAD(+) binding site.

The protein belongs to the urocanase family. NAD(+) serves as cofactor.

It localises to the cytoplasm. It catalyses the reaction 4-imidazolone-5-propanoate = trans-urocanate + H2O. It functions in the pathway amino-acid degradation; L-histidine degradation into L-glutamate; N-formimidoyl-L-glutamate from L-histidine: step 2/3. Its function is as follows. Catalyzes the conversion of urocanate to 4-imidazolone-5-propionate. The protein is Urocanate hydratase of Acidiphilium cryptum (strain JF-5).